Reading from the N-terminus, the 383-residue chain is Processive diacylglycerol beta-glucosyltransferase (383 aa).

The protein belongs to the glycosyltransferase 28 family. UgtP subfamily.

It is found in the cell membrane. It catalyses the reaction a 1,2-diacyl-3-O-(beta-D-glucopyranosyl)-sn-glycerol + UDP-alpha-D-glucose = a 1,2-diacyl-3-O-(beta-D-Glc-(1-&gt;6)-beta-D-Glc)-sn-glycerol + UDP + H(+). The catalysed reaction is a 1,2-diacyl-3-O-(beta-D-Glc-(1-&gt;6)-beta-D-Glc)-sn-glycerol + UDP-alpha-D-glucose = a 1,2-diacyl-3-O-(beta-D-Glc-(1-&gt;6)-beta-D-Glc-(1-&gt;6)-beta-D-Glc)-sn-glycerol + UDP + H(+). The enzyme catalyses a 1,2-diacyl-sn-glycerol + UDP-alpha-D-glucose = a 1,2-diacyl-3-O-(beta-D-glucopyranosyl)-sn-glycerol + UDP + H(+). The protein operates within glycolipid metabolism; diglucosyl-diacylglycerol biosynthesis. Processive glucosyltransferase involved in the biosynthesis of both the bilayer- and non-bilayer-forming membrane glucolipids. Is able to successively transfer up to three glucosyl residues to diacylglycerol (DAG), thereby catalyzing the formation of beta-monoglucosyl-DAG (3-O-(beta-D-glucopyranosyl)-1,2-diacyl-sn-glycerol), beta-diglucosyl-DAG (3-O-(beta-D-glucopyranosyl-beta-(1-&gt;6)-D-glucopyranosyl)-1,2-diacyl-sn-glycerol) and beta-triglucosyl-DAG (3-O-(beta-D-glucopyranosyl-beta-(1-&gt;6)-D-glucopyranosyl-beta-(1-&gt;6)-D-glucopyranosyl)-1,2-diacyl-sn-glycerol). Beta-diglucosyl-DAG is the predominant glycolipid found in Bacillales and is also used as a membrane anchor for lipoteichoic acid (LTA). The protein is Processive diacylglycerol beta-glucosyltransferase of Bacillus pumilus (strain SAFR-032).